Here is a 190-residue protein sequence, read N- to C-terminus: UPF0398 protein LAR_0869 (190 aa).

Belongs to the UPF0398 family.

The polypeptide is UPF0398 protein LAR_0869 (Limosilactobacillus reuteri subsp. reuteri (strain JCM 1112) (Lactobacillus reuteri)).